A 268-amino-acid polypeptide reads, in one-letter code: Imidazole glycerol phosphate synthase subunit HisF (268 aa).

Catalysis depends on residues Asp-12 and Asp-131.

It belongs to the HisA/HisF family. Heterodimer of HisH and HisF.

It is found in the cytoplasm. It carries out the reaction 5-[(5-phospho-1-deoxy-D-ribulos-1-ylimino)methylamino]-1-(5-phospho-beta-D-ribosyl)imidazole-4-carboxamide + L-glutamine = D-erythro-1-(imidazol-4-yl)glycerol 3-phosphate + 5-amino-1-(5-phospho-beta-D-ribosyl)imidazole-4-carboxamide + L-glutamate + H(+). It participates in amino-acid biosynthesis; L-histidine biosynthesis; L-histidine from 5-phospho-alpha-D-ribose 1-diphosphate: step 5/9. In terms of biological role, IGPS catalyzes the conversion of PRFAR and glutamine to IGP, AICAR and glutamate. The HisF subunit catalyzes the cyclization activity that produces IGP and AICAR from PRFAR using the ammonia provided by the HisH subunit. The sequence is that of Imidazole glycerol phosphate synthase subunit HisF from Salinibacter ruber (strain DSM 13855 / M31).